The following is a 144-amino-acid chain: Large ribosomal subunit protein uL13 (144 aa).

This sequence belongs to the universal ribosomal protein uL13 family. In terms of assembly, part of the 50S ribosomal subunit.

Its function is as follows. This protein is one of the early assembly proteins of the 50S ribosomal subunit, although it is not seen to bind rRNA by itself. It is important during the early stages of 50S assembly. This chain is Large ribosomal subunit protein uL13, found in Nitratidesulfovibrio vulgaris (strain ATCC 29579 / DSM 644 / CCUG 34227 / NCIMB 8303 / VKM B-1760 / Hildenborough) (Desulfovibrio vulgaris).